A 407-amino-acid chain; its full sequence is Obg-like ATPase homolog (407 aa).

The OBG-type G domain occupies 46 to 301 (LKIGIVGMPN…LTPEEAAQEC (256 aa)). Residues 55 to 60 (NIGKST) and methionine 249 contribute to the ATP site. The TGS domain maps to 322–405 (NLIHYFTASE…EPGDIIFWKI (84 aa)).

This sequence belongs to the TRAFAC class OBG-HflX-like GTPase superfamily. OBG GTPase family.

Hydrolyzes ATP, and can also hydrolyze GTP with lower efficiency. Has lower affinity for GTP. The polypeptide is Obg-like ATPase homolog (Schizosaccharomyces pombe (strain 972 / ATCC 24843) (Fission yeast)).